Here is a 230-residue protein sequence, read N- to C-terminus: Large ribosomal subunit protein uL1 (230 aa).

This sequence belongs to the universal ribosomal protein uL1 family. As to quaternary structure, part of the 50S ribosomal subunit.

Binds directly to 23S rRNA. The L1 stalk is quite mobile in the ribosome, and is involved in E site tRNA release. In terms of biological role, protein L1 is also a translational repressor protein, it controls the translation of the L11 operon by binding to its mRNA. The protein is Large ribosomal subunit protein uL1 of Desulfitobacterium hafniense (strain DSM 10664 / DCB-2).